The chain runs to 91 residues: DNA-directed RNA polymerase subunit omega (91 aa).

Belongs to the RNA polymerase subunit omega family. As to quaternary structure, the RNAP catalytic core consists of 2 alpha, 1 beta, 1 beta' and 1 omega subunit. When a sigma factor is associated with the core the holoenzyme is formed, which can initiate transcription.

It catalyses the reaction RNA(n) + a ribonucleoside 5'-triphosphate = RNA(n+1) + diphosphate. Promotes RNA polymerase assembly. Latches the N- and C-terminal regions of the beta' subunit thereby facilitating its interaction with the beta and alpha subunits. The chain is DNA-directed RNA polymerase subunit omega from Yersinia enterocolitica serotype O:8 / biotype 1B (strain NCTC 13174 / 8081).